A 182-amino-acid chain; its full sequence is Protein GrpE (182 aa).

The interval 1–37 (MSDSSKERKKKFTGMVNKQKSEDQQNNSKQADDLDEL) is disordered.

The protein belongs to the GrpE family. Homodimer.

Its subcellular location is the cytoplasm. Functionally, participates actively in the response to hyperosmotic and heat shock by preventing the aggregation of stress-denatured proteins, in association with DnaK and GrpE. It is the nucleotide exchange factor for DnaK and may function as a thermosensor. Unfolded proteins bind initially to DnaJ; upon interaction with the DnaJ-bound protein, DnaK hydrolyzes its bound ATP, resulting in the formation of a stable complex. GrpE releases ADP from DnaK; ATP binding to DnaK triggers the release of the substrate protein, thus completing the reaction cycle. Several rounds of ATP-dependent interactions between DnaJ, DnaK and GrpE are required for fully efficient folding. This Wolbachia sp. subsp. Brugia malayi (strain TRS) protein is Protein GrpE.